The primary structure comprises 96 residues: uncharacterized protein (96 aa).

3 helical membrane-spanning segments follow: residues 2-22, 38-58, and 68-88; these read FIFNVLTIRCTFHVLFAICYF, AGLKIFLVFELAVTIFNTVML, and LTLAILIVSVVMFVYHQQLIV.

The protein localises to the membrane. This is an uncharacterized protein from Schizosaccharomyces pombe (strain 972 / ATCC 24843) (Fission yeast).